A 411-amino-acid chain; its full sequence is MLNFKTLQAIDFQNKTVVLRSDFNVPMINGVISDSERILAGLDTIKFLVKKNCKIVLLSHLSRIKSLEDKLNNKKSLKPVAELLQQLLPTVKVQFSCKNTGAEVKQKVQALAFGEILLLENTRYCDVNDKGEIVKLESKNDPELAKFWASLGEIFVNDAFGTAHRKHASNAGIAKYVAKSCIGFLMEKELKNLSYLIQSPQKPFVVVLGGAKVSDKLKVVENLLKLADNILIGGGMVNTFLKAKGKATANSLVEKELIDVAKQILDKDTHNKIVLAIDQVMGSEFKDQTGITLDVSDKIQEQYQSYMSLDVGSKTIALFESYLKTAKTIFWNGPLGVFEFTNFAKGTSKIGEIIAKNKTAFSVIGGGDSAAAVKQMQLSDQFSFISTGGGASLALIGGEELVGISDIQKNS.

Substrate contacts are provided by residues 22 to 24, Arg37, 60 to 63, Arg123, and Arg165; these read DFN and HLSR. ATP contacts are provided by residues Lys216, Glu339, and 366 to 369; that span reads GGDS.

It belongs to the phosphoglycerate kinase family. In terms of assembly, monomer.

Its subcellular location is the cytoplasm. The catalysed reaction is (2R)-3-phosphoglycerate + ATP = (2R)-3-phospho-glyceroyl phosphate + ADP. The protein operates within carbohydrate degradation; glycolysis; pyruvate from D-glyceraldehyde 3-phosphate: step 2/5. In Mycoplasma genitalium (strain ATCC 33530 / DSM 19775 / NCTC 10195 / G37) (Mycoplasmoides genitalium), this protein is Phosphoglycerate kinase (pgk).